The chain runs to 689 residues: DNA ligase (689 aa).

NAD(+)-binding positions include 58–62, 107–108, and glutamate 138; these read DQEYD and SL. Lysine 140 serves as the catalytic N6-AMP-lysine intermediate. 4 residues coordinate NAD(+): arginine 161, glutamate 198, lysine 314, and lysine 338. 4 residues coordinate Zn(2+): cysteine 432, cysteine 435, cysteine 448, and cysteine 453. The BRCT domain maps to 611-689; the sequence is ASSGTLSGKT…QELLEMLHGG (79 aa).

The protein belongs to the NAD-dependent DNA ligase family. LigA subfamily. Mg(2+) serves as cofactor. Requires Mn(2+) as cofactor.

It catalyses the reaction NAD(+) + (deoxyribonucleotide)n-3'-hydroxyl + 5'-phospho-(deoxyribonucleotide)m = (deoxyribonucleotide)n+m + AMP + beta-nicotinamide D-nucleotide.. DNA ligase that catalyzes the formation of phosphodiester linkages between 5'-phosphoryl and 3'-hydroxyl groups in double-stranded DNA using NAD as a coenzyme and as the energy source for the reaction. It is essential for DNA replication and repair of damaged DNA. The polypeptide is DNA ligase (Methylacidiphilum infernorum (isolate V4) (Methylokorus infernorum (strain V4))).